Reading from the N-terminus, the 699-residue chain is MNPIVKSFEYGQHTVTLETGVIARQADAAVLASMGDTTVLVTVVGKKEAEAGRDFFPLTVNYQEKTYAAGKIPGGFFKREGRPSEDETLIARLIDRPIRPLFPNGFTNEVQVIITVVSVDPQIEPDIISMIGTSAALAISGIPFSGPLGAARVGYINGEYVLNPTVTQLANSQLNLVVAGTEGAVLMVESEAQALPEEVMLGSVVYGHDQQQVVIKAIAEFKAEAGKPAWNWTAPVANEALVAQVKELAEVGLAQAYQIQVKQERYAQVAVVKAAAKEALLAANPEVDLREVDGLLGSLEKKVVRGRIIRGEPRIDGREPDMVRALSVLAGVLPRTHGSALFTRGETQALVTCTLGTERDAQKIDSIMGERTNRFMLHYNFPPYSVGETGMVGSPKRREIGHGKLAWRGINAVMPSAEEFPYSVRVVSEITESNGSSSMASVCGTSLALMDAGVPIKTSVAGIAMGLVKEGDNFVVLSDILGDEDHLGDMDFKVAGTRDGVTALQMDIKIEGITKEIMEIALQQAYGARVHILNVMDQAIGSHRDDISDHAPRITTIKINPEKIRDVIGKGGAVIRALTEETGTTIELEDDGTVKIASSNGEATKEAIRRIEEITSEVEVGRIYNGKVIRIVDFGAFVNILPGKDGLVHISQISDERVANVSDHLELNQEVTVKVMEVDRQGRVRLSIKEAQTKEAAAE.

Positions 485 and 491 each coordinate Mg(2+). The region spanning 552-611 (PRITTIKINPEKIRDVIGKGGAVIRALTEETGTTIELEDDGTVKIASSNGEATKEAIRRI) is the KH domain. The S1 motif domain occupies 621 to 689 (GRIYNGKVIR…RQGRVRLSIK (69 aa)).

Belongs to the polyribonucleotide nucleotidyltransferase family. As to quaternary structure, component of the RNA degradosome, which is a multiprotein complex involved in RNA processing and mRNA degradation. The cofactor is Mg(2+).

Its subcellular location is the cytoplasm. It catalyses the reaction RNA(n+1) + phosphate = RNA(n) + a ribonucleoside 5'-diphosphate. Involved in mRNA degradation. Catalyzes the phosphorolysis of single-stranded polyribonucleotides processively in the 3'- to 5'-direction. This Shewanella sp. (strain MR-4) protein is Polyribonucleotide nucleotidyltransferase.